Here is a 185-residue protein sequence, read N- to C-terminus: Threonylcarbamoyl-AMP synthase (185 aa).

The YrdC-like domain occupies 5 to 185 (ADRIADAVAA…DLQSGETLRR (181 aa)).

This sequence belongs to the SUA5 family. TsaC subfamily.

It is found in the cytoplasm. The catalysed reaction is L-threonine + hydrogencarbonate + ATP = L-threonylcarbamoyladenylate + diphosphate + H2O. Its function is as follows. Required for the formation of a threonylcarbamoyl group on adenosine at position 37 (t(6)A37) in tRNAs that read codons beginning with adenine. Catalyzes the conversion of L-threonine, HCO(3)(-)/CO(2) and ATP to give threonylcarbamoyl-AMP (TC-AMP) as the acyladenylate intermediate, with the release of diphosphate. The chain is Threonylcarbamoyl-AMP synthase from Chromohalobacter salexigens (strain ATCC BAA-138 / DSM 3043 / CIP 106854 / NCIMB 13768 / 1H11).